Here is a 294-residue protein sequence, read N- to C-terminus: Phosphatidylserine decarboxylase proenzyme (294 aa).

Catalysis depends on charge relay system; for autoendoproteolytic cleavage activity residues aspartate 113, histidine 169, and serine 256. Serine 256 serves as the catalytic Schiff-base intermediate with substrate; via pyruvic acid; for decarboxylase activity. Position 256 is a pyruvic acid (Ser); by autocatalysis (serine 256).

Belongs to the phosphatidylserine decarboxylase family. PSD-B subfamily. Prokaryotic type II sub-subfamily. In terms of assembly, heterodimer of a large membrane-associated beta subunit and a small pyruvoyl-containing alpha subunit. It depends on pyruvate as a cofactor. In terms of processing, is synthesized initially as an inactive proenzyme. Formation of the active enzyme involves a self-maturation process in which the active site pyruvoyl group is generated from an internal serine residue via an autocatalytic post-translational modification. Two non-identical subunits are generated from the proenzyme in this reaction, and the pyruvate is formed at the N-terminus of the alpha chain, which is derived from the carboxyl end of the proenzyme. The autoendoproteolytic cleavage occurs by a canonical serine protease mechanism, in which the side chain hydroxyl group of the serine supplies its oxygen atom to form the C-terminus of the beta chain, while the remainder of the serine residue undergoes an oxidative deamination to produce ammonia and the pyruvoyl prosthetic group on the alpha chain. During this reaction, the Ser that is part of the protease active site of the proenzyme becomes the pyruvoyl prosthetic group, which constitutes an essential element of the active site of the mature decarboxylase.

It is found in the cell membrane. It carries out the reaction a 1,2-diacyl-sn-glycero-3-phospho-L-serine + H(+) = a 1,2-diacyl-sn-glycero-3-phosphoethanolamine + CO2. It functions in the pathway phospholipid metabolism; phosphatidylethanolamine biosynthesis; phosphatidylethanolamine from CDP-diacylglycerol: step 2/2. Catalyzes the formation of phosphatidylethanolamine (PtdEtn) from phosphatidylserine (PtdSer). The protein is Phosphatidylserine decarboxylase proenzyme of Clostridium perfringens (strain SM101 / Type A).